We begin with the raw amino-acid sequence, 466 residues long: Arginine biosynthesis bifunctional protein ArgJ, mitochondrial (466 aa).

A mitochondrion-targeting transit peptide spans 1–9 (MSSLVLKRF). Substrate contacts are provided by Thr-183, Lys-209, Thr-232, Glu-320, Asn-461, and Ser-466. Thr-232 (nucleophile) is an active-site residue.

The protein belongs to the ArgJ family. As to quaternary structure, heterodimer of an alpha and a beta chain. In terms of processing, the alpha and beta chains are autoproteolytically processed from a single precursor protein within the mitochondrion.

The protein resides in the mitochondrion matrix. It catalyses the reaction N(2)-acetyl-L-ornithine + L-glutamate = N-acetyl-L-glutamate + L-ornithine. The enzyme catalyses L-glutamate + acetyl-CoA = N-acetyl-L-glutamate + CoA + H(+). It functions in the pathway amino-acid biosynthesis; L-arginine biosynthesis; L-ornithine and N-acetyl-L-glutamate from L-glutamate and N(2)-acetyl-L-ornithine (cyclic): step 1/1. Its pathway is amino-acid biosynthesis; L-arginine biosynthesis; N(2)-acetyl-L-ornithine from L-glutamate: step 1/4. Catalyzes two activities which are involved in the cyclic version of arginine biosynthesis: the synthesis of acetylglutamate from glutamate and acetyl-CoA, and of ornithine by transacetylation between acetylornithine and glutamate. The sequence is that of Arginine biosynthesis bifunctional protein ArgJ, mitochondrial from Laccaria bicolor (strain S238N-H82 / ATCC MYA-4686) (Bicoloured deceiver).